Consider the following 351-residue polypeptide: Ribosomal RNA small subunit methyltransferase H (351 aa).

S-adenosyl-L-methionine-binding positions include 48–50 (GGY), Asp-67, Phe-94, Asp-115, and Gln-122. Residues 298 to 351 (GPVLPSEAETEVNPRARSAKLRAGERTDGPAPPPLSAIETLASLPAPQGRGTRR) are disordered.

This sequence belongs to the methyltransferase superfamily. RsmH family.

The protein localises to the cytoplasm. The enzyme catalyses cytidine(1402) in 16S rRNA + S-adenosyl-L-methionine = N(4)-methylcytidine(1402) in 16S rRNA + S-adenosyl-L-homocysteine + H(+). In terms of biological role, specifically methylates the N4 position of cytidine in position 1402 (C1402) of 16S rRNA. The protein is Ribosomal RNA small subunit methyltransferase H of Methylorubrum populi (strain ATCC BAA-705 / NCIMB 13946 / BJ001) (Methylobacterium populi).